Consider the following 380-residue polypeptide: Polygalacturonase 2 (380 aa).

Positions 1-20 (MIAGSKLLMLGLFGALAVHA) are cleaved as a signal peptide. The propeptide occupies 21–38 (LPEPAKAQVTAAPKLEER). C42 and C60 form a disulfide bridge. PbH1 repeat units lie at residues 173-204 (ATDL…DVGS) and 205-226 (STGI…AVNS). The active-site Proton donor is the D219. A disulfide bridge links C221 with C237. H241 is an active-site residue. 3 PbH1 repeats span residues 256–277 (VANV…RIKT), 285–307 (VKNV…VIEQ), and 319–364 (TDGV…SVSG). N287 carries N-linked (GlcNAc...) asparagine glycosylation. 2 disulfides stabilise this stretch: C347–C352 and C371–C380.

It belongs to the glycosyl hydrolase 28 family.

The protein localises to the secreted. The enzyme catalyses (1,4-alpha-D-galacturonosyl)n+m + H2O = (1,4-alpha-D-galacturonosyl)n + (1,4-alpha-D-galacturonosyl)m.. This chain is Polygalacturonase 2 (PG2), found in Penicillium olsonii.